Here is a 218-residue protein sequence, read N- to C-terminus: Thiopurine S-methyltransferase (218 aa).

Positions 10, 45, 66, and 123 each coordinate S-adenosyl-L-methionine.

Belongs to the class I-like SAM-binding methyltransferase superfamily. TPMT family.

The protein resides in the cytoplasm. It catalyses the reaction S-adenosyl-L-methionine + a thiopurine = S-adenosyl-L-homocysteine + a thiopurine S-methylether.. The polypeptide is Thiopurine S-methyltransferase (Shewanella amazonensis (strain ATCC BAA-1098 / SB2B)).